The following is a 419-amino-acid chain: MAEDLINSFMNGPDENGRFGIFGGRFVSETLMPLILSLEEEYEKAKVDPDFWAEMDDLWKNYVGRPSPLYFAERLTNHLGGAKVYMKRDELNHTGAHKVNNVLGQILLARRMGKTRIIAETGAGQHGVATATVCAKFGLKCVVYMGAHDVRRQAPNVFRMRLLGAEVIPVTSGRGTLKDAMNDALRDWVTNVRDTFYCIGTVAGPHPYPAMVRDFQSVIGKEVRWQLAEQEGEGRLPDTVIAAIGGGSNAMGLFHPFLDDPSVNIIGVEAGGKGVDEKMEHCASLTGGRPGVLHGNRTYLLQDDDGQILEGFSISAGLDYPGIGPEHAWLHETGRAQYVSITDKEALEAFQLSCAMEGIIPALEPSHALAHVTKIAPELPKDHIIVMNMCGRGDKDIFTVARHLGFDMSDTEEGRDLEE.

K98 bears the N6-(pyridoxal phosphate)lysine mark.

The protein belongs to the TrpB family. As to quaternary structure, tetramer of two alpha and two beta chains. The cofactor is pyridoxal 5'-phosphate.

It catalyses the reaction (1S,2R)-1-C-(indol-3-yl)glycerol 3-phosphate + L-serine = D-glyceraldehyde 3-phosphate + L-tryptophan + H2O. The protein operates within amino-acid biosynthesis; L-tryptophan biosynthesis; L-tryptophan from chorismate: step 5/5. Functionally, the beta subunit is responsible for the synthesis of L-tryptophan from indole and L-serine. The chain is Tryptophan synthase beta chain from Ruegeria sp. (strain TM1040) (Silicibacter sp.).